A 57-amino-acid polypeptide reads, in one-letter code: Large ribosomal subunit protein bL32 (57 aa).

Belongs to the bacterial ribosomal protein bL32 family.

This Corynebacterium glutamicum (strain R) protein is Large ribosomal subunit protein bL32.